The following is a 171-amino-acid chain: UPF0303 protein YPK_1581 (171 aa).

The protein belongs to the UPF0303 family.

The polypeptide is UPF0303 protein YPK_1581 (Yersinia pseudotuberculosis serotype O:3 (strain YPIII)).